The primary structure comprises 404 residues: Pyrophosphate--fructose 6-phosphate 1-phosphotransferase (404 aa).

Glycine 13 is a diphosphate binding site. Asparagine 108 is a binding site for Mg(2+). Residues 136–138, 180–182, glutamate 237, and 295–298 each bind substrate; these read TID, MGR, and YLQR. Aspartate 138 acts as the Proton acceptor in catalysis.

It belongs to the phosphofructokinase type A (PFKA) family. PPi-dependent PFK group II subfamily. Clade 'B2' sub-subfamily. Homodimer. Mg(2+) is required as a cofactor.

Its subcellular location is the cytoplasm. It carries out the reaction beta-D-fructose 6-phosphate + diphosphate = beta-D-fructose 1,6-bisphosphate + phosphate + H(+). It participates in carbohydrate degradation; glycolysis; D-glyceraldehyde 3-phosphate and glycerone phosphate from D-glucose: step 3/4. Non-allosteric. In terms of biological role, catalyzes the phosphorylation of D-fructose 6-phosphate, the first committing step of glycolysis. Uses inorganic phosphate (PPi) as phosphoryl donor instead of ATP like common ATP-dependent phosphofructokinases (ATP-PFKs), which renders the reaction reversible, and can thus function both in glycolysis and gluconeogenesis. Consistently, PPi-PFK can replace the enzymes of both the forward (ATP-PFK) and reverse (fructose-bisphosphatase (FBPase)) reactions. The sequence is that of Pyrophosphate--fructose 6-phosphate 1-phosphotransferase from Rhodospirillum rubrum (strain ATCC 11170 / ATH 1.1.1 / DSM 467 / LMG 4362 / NCIMB 8255 / S1).